Here is a 115-residue protein sequence, read N- to C-terminus: Type 3 secretion system chaperone PscG (115 aa).

Belongs to the YscG family. Forms a stable heterotrimeric complex with PscE and PscF/SctF in the cytoplasm. Co-stabilized by PscE.

It is found in the cytoplasm. In terms of biological role, chaperone of the type III secretion system (T3SS), also called injectisome, which is used to inject bacterial effector proteins into eukaryotic host cells, facilitating the establishment and dissemination of infection. Along with PscE, prevents premature polymerization of the PscF/SctF needle protein within the cytoplasm. Required for type III secretion needle assembly. Also required for cytotoxicity by influencing PscF/SctF levels. In Pseudomonas aeruginosa (strain ATCC 15692 / DSM 22644 / CIP 104116 / JCM 14847 / LMG 12228 / 1C / PRS 101 / PAO1), this protein is Type 3 secretion system chaperone PscG (pscG).